Here is a 98-residue protein sequence, read N- to C-terminus: NADH-ubiquinone oxidoreductase chain 4L (98 aa).

Helical transmembrane passes span 1–21 (MLSI…GVLI), 29–49 (TLLC…LLIT), and 59–79 (TPLI…ALLV).

It belongs to the complex I subunit 4L family. Core subunit of respiratory chain NADH dehydrogenase (Complex I) which is composed of 45 different subunits.

It is found in the mitochondrion inner membrane. It carries out the reaction a ubiquinone + NADH + 5 H(+)(in) = a ubiquinol + NAD(+) + 4 H(+)(out). Its function is as follows. Core subunit of the mitochondrial membrane respiratory chain NADH dehydrogenase (Complex I) which catalyzes electron transfer from NADH through the respiratory chain, using ubiquinone as an electron acceptor. Part of the enzyme membrane arm which is embedded in the lipid bilayer and involved in proton translocation. The chain is NADH-ubiquinone oxidoreductase chain 4L (MT-ND4L) from Sminthopsis crassicaudata (Fat-tailed dunnart).